The sequence spans 124 residues: Small ribosomal subunit protein uS13 (124 aa).

The interval 95-124 (GLPVRGQRTKTNARTRKGPKRTIAGKKKAR) is disordered.

It belongs to the universal ribosomal protein uS13 family. In terms of assembly, part of the 30S ribosomal subunit. Forms a loose heterodimer with protein S19. Forms two bridges to the 50S subunit in the 70S ribosome.

Functionally, located at the top of the head of the 30S subunit, it contacts several helices of the 16S rRNA. In the 70S ribosome it contacts the 23S rRNA (bridge B1a) and protein L5 of the 50S subunit (bridge B1b), connecting the 2 subunits; these bridges are implicated in subunit movement. Contacts the tRNAs in the A and P-sites. The protein is Small ribosomal subunit protein uS13 of Mycobacterium sp. (strain JLS).